Reading from the N-terminus, the 439-residue chain is GTPase Der (439 aa).

2 consecutive EngA-type G domains span residues 2–166 (SVVA…PAPA) and 176–351 (TRLA…IEFN). Residues 8–15 (GRPNVGKS), 55–59 (DTGGF), 118–121 (NKVD), 182–189 (GRPNVGKS), 229–233 (DTAGI), and 294–297 (NKWD) each bind GTP. The region spanning 352–436 (RQVPTGVLNR…PIRLKFKDRN (85 aa)) is the KH-like domain.

It belongs to the TRAFAC class TrmE-Era-EngA-EngB-Septin-like GTPase superfamily. EngA (Der) GTPase family. In terms of assembly, associates with the 50S ribosomal subunit.

Functionally, GTPase that plays an essential role in the late steps of ribosome biogenesis. The sequence is that of GTPase Der from Syntrophotalea carbinolica (strain DSM 2380 / NBRC 103641 / GraBd1) (Pelobacter carbinolicus).